The following is a 443-amino-acid chain: Glutamate--tRNA ligase 1 (443 aa).

Positions P10–N20 match the 'HIGH' region motif. The 'KMSKS' region signature appears at A241–R245. ATP is bound at residue K244.

Belongs to the class-I aminoacyl-tRNA synthetase family. Glutamate--tRNA ligase type 1 subfamily. Monomer.

The protein localises to the cytoplasm. It carries out the reaction tRNA(Glu) + L-glutamate + ATP = L-glutamyl-tRNA(Glu) + AMP + diphosphate. In terms of biological role, catalyzes the attachment of glutamate to tRNA(Glu) in a two-step reaction: glutamate is first activated by ATP to form Glu-AMP and then transferred to the acceptor end of tRNA(Glu). The protein is Glutamate--tRNA ligase 1 of Ruegeria pomeroyi (strain ATCC 700808 / DSM 15171 / DSS-3) (Silicibacter pomeroyi).